The sequence spans 264 residues: Outer kinetochore KNL1 complex subunit sos7 (264 aa).

Residues 90 to 236 adopt a coiled-coil conformation; sequence EAEDNEKLET…SNQIKAAIHT (147 aa).

It belongs to the KRE28 family. In terms of assembly, component of the KNL1/SPC105 complex composed of at least spc7 and sos7. Part of the outer kinetochore KMN network that includes the KNL1, MIS12 and NDC80 complexes. Interacts (via C-terminus) with spc7 (via C-terminus); the interaction is direct.

It is found in the nucleus. It localises to the chromosome. The protein localises to the centromere. Its subcellular location is the kinetochore. Functionally, acts as a component of the outer kinetochore KNL1 complex that facilitates microtubule-kinetochore interactions and the spindle assembly checkpoint. Kinetochores, consisting of a centromere-associated inner segment and a microtubule-contacting outer segment, play a crucial role in chromosome segregation by mediating the physical connection between centromeric DNA and spindle microtubules. The outer kinetochore is made up of the ten-subunit KMN network, comprising the MIS12, NDC80 and KNL1 complexes, and auxiliary microtubule-associated components; together they connect the outer kinetochore with the inner kinetochore, bind microtubules, and mediate interactions with mitotic checkpoint proteins that delay anaphase until chromosomes are bioriented on the spindle. This chain is Outer kinetochore KNL1 complex subunit sos7 (sos7), found in Schizosaccharomyces pombe (strain 972 / ATCC 24843) (Fission yeast).